The sequence spans 863 residues: Probable beta-glucosidase A (863 aa).

Positions 1 to 19 (MKLGWLEAAALTAASVASA) are cleaved as a signal peptide. N-linked (GlcNAc...) asparagine glycans are attached at residues N65, N214, and N255. D283 is a catalytic residue. N-linked (GlcNAc...) asparagine glycosylation is found at N318, N325, N357, N493, N526, N545, N567, N664, and N715. Residues 720 to 754 (KESSGDPNYGWDDEDYIPEGAKDGSPQDVLPSGGG) are disordered.

This sequence belongs to the glycosyl hydrolase 3 family.

The protein localises to the secreted. The enzyme catalyses Hydrolysis of terminal, non-reducing beta-D-glucosyl residues with release of beta-D-glucose.. It participates in glycan metabolism; cellulose degradation. In terms of biological role, beta-glucosidases are one of a number of cellulolytic enzymes involved in the degradation of cellulosic biomass. Catalyzes the last step releasing glucose from the inhibitory cellobiose. The protein is Probable beta-glucosidase A (bglA) of Emericella nidulans (strain FGSC A4 / ATCC 38163 / CBS 112.46 / NRRL 194 / M139) (Aspergillus nidulans).